The sequence spans 411 residues: Ferrochelatase, mitochondrial (411 aa).

The transit peptide at 1-41 (MAAFRAAHRLLGHILRNESSAGLVTQRWSSSAAVASVPKSS) directs the protein to the mitochondrion. Residues 34–55 (VASVPKSSDPKPHAQPDKRKPK) are disordered. Over residues 41-51 (SDPKPHAQPDK) the composition is skewed to basic and acidic residues. Protoporphyrin IX contacts are provided by arginine 102, tyrosine 110, and serine 117. Cysteine 183 serves as a coordination point for [2Fe-2S] cluster. Active-site residues include histidine 217 and aspartate 370. 3 residues coordinate [2Fe-2S] cluster: cysteine 390, cysteine 393, and cysteine 398.

This sequence belongs to the ferrochelatase family. In terms of assembly, homodimer. Homotetramer. [2Fe-2S] cluster is required as a cofactor.

It localises to the mitochondrion inner membrane. The enzyme catalyses heme b + 2 H(+) = protoporphyrin IX + Fe(2+). Its pathway is porphyrin-containing compound metabolism; protoheme biosynthesis; protoheme from protoporphyrin-IX: step 1/1. Its function is as follows. Catalyzes the ferrous insertion into protoporphyrin IX. The polypeptide is Ferrochelatase, mitochondrial (Xenopus laevis (African clawed frog)).